The following is a 100-amino-acid chain: Aspartyl/glutamyl-tRNA(Asn/Gln) amidotransferase subunit C (100 aa).

It belongs to the GatC family. As to quaternary structure, heterotrimer of A, B and C subunits.

It catalyses the reaction L-glutamyl-tRNA(Gln) + L-glutamine + ATP + H2O = L-glutaminyl-tRNA(Gln) + L-glutamate + ADP + phosphate + H(+). The enzyme catalyses L-aspartyl-tRNA(Asn) + L-glutamine + ATP + H2O = L-asparaginyl-tRNA(Asn) + L-glutamate + ADP + phosphate + 2 H(+). Functionally, allows the formation of correctly charged Asn-tRNA(Asn) or Gln-tRNA(Gln) through the transamidation of misacylated Asp-tRNA(Asn) or Glu-tRNA(Gln) in organisms which lack either or both of asparaginyl-tRNA or glutaminyl-tRNA synthetases. The reaction takes place in the presence of glutamine and ATP through an activated phospho-Asp-tRNA(Asn) or phospho-Glu-tRNA(Gln). The chain is Aspartyl/glutamyl-tRNA(Asn/Gln) amidotransferase subunit C from Streptococcus pneumoniae serotype 19F (strain G54).